The primary structure comprises 155 residues: Ribosomal RNA large subunit methyltransferase H (155 aa).

Residues L73, G104, and 123 to 128 (LSRMTF) each bind S-adenosyl-L-methionine.

The protein belongs to the RNA methyltransferase RlmH family. As to quaternary structure, homodimer.

The protein localises to the cytoplasm. It carries out the reaction pseudouridine(1915) in 23S rRNA + S-adenosyl-L-methionine = N(3)-methylpseudouridine(1915) in 23S rRNA + S-adenosyl-L-homocysteine + H(+). In terms of biological role, specifically methylates the pseudouridine at position 1915 (m3Psi1915) in 23S rRNA. This is Ribosomal RNA large subunit methyltransferase H from Methylococcus capsulatus (strain ATCC 33009 / NCIMB 11132 / Bath).